The chain runs to 322 residues: Ribonuclease Z (322 aa).

Residues His62, His64, Asp66, His67, His143, Asp215, and His273 each contribute to the Zn(2+) site. Asp66 functions as the Proton acceptor in the catalytic mechanism. Basic and acidic residues predominate over residues 300–314 (ELRRYELDPREKEPD). Residues 300–322 (ELRRYELDPREKEPDPVGPADES) are disordered.

It belongs to the RNase Z family. As to quaternary structure, homodimer. Requires Zn(2+) as cofactor.

It carries out the reaction Endonucleolytic cleavage of RNA, removing extra 3' nucleotides from tRNA precursor, generating 3' termini of tRNAs. A 3'-hydroxy group is left at the tRNA terminus and a 5'-phosphoryl group is left at the trailer molecule.. Functionally, zinc phosphodiesterase, which displays some tRNA 3'-processing endonuclease activity. Probably involved in tRNA maturation, by removing a 3'-trailer from precursor tRNA. This is Ribonuclease Z from Salinibacter ruber (strain DSM 13855 / M31).